We begin with the raw amino-acid sequence, 236 residues long: 2,3,4,5-tetrahydropyridine-2,6-dicarboxylate N-acetyltransferase (236 aa).

This sequence belongs to the transferase hexapeptide repeat family. DapH subfamily.

The catalysed reaction is (S)-2,3,4,5-tetrahydrodipicolinate + acetyl-CoA + H2O = L-2-acetamido-6-oxoheptanedioate + CoA. Its pathway is amino-acid biosynthesis; L-lysine biosynthesis via DAP pathway; LL-2,6-diaminopimelate from (S)-tetrahydrodipicolinate (acetylase route): step 1/3. Functionally, catalyzes the transfer of an acetyl group from acetyl-CoA to tetrahydrodipicolinate. This chain is 2,3,4,5-tetrahydropyridine-2,6-dicarboxylate N-acetyltransferase, found in Clostridium beijerinckii (strain ATCC 51743 / NCIMB 8052) (Clostridium acetobutylicum).